The chain runs to 400 residues: MDIATGPESLDRCFTRGPSDCAKMLDTIKMEDHPLRTGTATLGVLLGSECQHQAVCEGCQRPISDRFLMRVNEASWHEECLQCTVCQQPLTTSCYFRDRKLFCKQDYQQLFAAKCSGCMEKIAPTEFVMRALECVYHLSCFCCCVCERQLRKGDEFVLKEGQLLCKSDYEKEKDLLSSGSPDDSDSVKSDDEEGDVKPGKGRVNQGKGSDDGKDPRRPKRPRTILTTQQRRAFKASFEVSSKPCRKVRETLAAETGLSVRVVQVWFQNQRAKIKKLARRHQQQQEQQNSQRLGQEVMSSRMEGMMTSYAPLAPSQQQIVTMDQNSYSTDPFQQGLTPPQMPGDHMNPYGNDTIFHDIDSDTSLTSLSDCFLASSEVTSMQARVGNPIDRLYSMQSSYFAS.

LIM zinc-binding domains follow at residues A54–A113 and K114–L175. The disordered stretch occupies residues L175–Q228. A DNA-binding region (homeobox) is located at residues P218–A277.

Shows a temporal expression pattern in three main areas: neural, kidney and limbs. From stage 13 onwards, expressed in regions of the nervous system including the placodes and otic vesicles, eye, specific sets of neurons, and in discreet regions of the neural tube. From stage 13, also expressed in the presumptive pronephros, and from stage 27 expression is predominant in the capsule of the pronephric glomus. Also expressed in the developing forelimbs and hindlimbs. In metamorphosing tadpoles, expressed in the eye, brain, muscle and mesonephric kidney.

It localises to the nucleus. Its function is as follows. Required for early specification of the kidney glomus, lying upstream of wt1 in the pathway controlling glomus differentiation. The balance in levels and expression patterns of binding partners such as lhx1/lim-1 influences differentiation into glomus or tubule derivatives. Involved in specification of serotonergic neurons. The sequence is that of LIM homeobox transcription factor 1-beta.1 from Xenopus laevis (African clawed frog).